A 1521-amino-acid chain; its full sequence is Probable DNA topoisomerase 2 (1521 aa).

Positions 1–10 are enriched in acidic residues; the sequence is MSDSENDYSD. Residues 1-87 are disordered; that stretch reads MSDSENDYSD…DDKSSSSDNE (87 aa). A compositionally biased stretch (basic residues) spans 36–48; sequence SKKKASATRKPAA. Residues 49–62 show a composition bias toward low complexity; that stretch reads KKATTTTTSTTKKS. ATP contacts are provided by residues asparagine 163, asparagine 192, 220–222, and 233–240; these read SSH and GRNGFGAK. An interaction with DNA region spans residues 412-414; sequence NKK. Position 446–448 (446–448) interacts with ATP; the sequence is QTK. Positions 527-640 constitute a Toprim domain; that stretch reads CTLILTEGDS…TLLRMPGFLV (114 aa). Mg(2+) contacts are provided by glutamate 533, aspartate 609, and aspartate 611. Positions 771 to 1273 constitute a Topo IIA-type catalytic domain; it reads IPNIVDGLKT…PIQEIYKRDL (503 aa). Tyrosine 861 functions as the O-(5'-phospho-DNA)-tyrosine intermediate in the catalytic mechanism. Positions 1007-1047 are disordered; the sequence is GTRKKKKEEKEKKAASRKGTKAKPTTTKRSKRVDDDDDNEK. Basic residues predominate over residues 1021–1037; sequence ASRKGTKAKPTTTKRSK. The tract at residues 1085-1094 is interaction with DNA; it reads KLVSTINETN. Disordered stretches follow at residues 1192-1222 and 1335-1521; these read KIKK…EQDD and IPTT…SDSD. Acidic residues predominate over residues 1201 to 1222; sequence DEEDAAISSDEEKDGAQEEQDD. Residues 1354–1368 show a composition bias toward low complexity; that stretch reads TTSTSTSTTTSSNTK. Residues 1422-1438 are compositionally biased toward acidic residues; the sequence is LSDESDQESDQESDQGS. Residues 1454-1467 show a composition bias toward low complexity; it reads PTTIATKKATTSKS. Positions 1468 to 1480 are enriched in basic and acidic residues; sequence KVIDDKSSDDEVI. Acidic residues predominate over residues 1503 to 1521; that stretch reads SDSDDDDLYDNEESSSDSD.

This sequence belongs to the type II topoisomerase family. Homodimer. Mg(2+) is required as a cofactor. Mn(2+) serves as cofactor. It depends on Ca(2+) as a cofactor.

It localises to the nucleus. The enzyme catalyses ATP-dependent breakage, passage and rejoining of double-stranded DNA.. Its function is as follows. Control of topological states of DNA by transient breakage and subsequent rejoining of DNA strands. Topoisomerase II makes double-strand breaks. This Dictyostelium discoideum (Social amoeba) protein is Probable DNA topoisomerase 2 (top2).